A 102-amino-acid chain; its full sequence is NADH-quinone oxidoreductase subunit K (102 aa).

The next 3 membrane-spanning stretches (helical) occupy residues 6–26, 30–50, and 64–84; these read LGQG…GVLV, LLFM…AFIV, and FILV…LILL.

It belongs to the complex I subunit 4L family. In terms of assembly, NDH-1 is composed of 14 different subunits. Subunits NuoA, H, J, K, L, M, N constitute the membrane sector of the complex.

The protein resides in the cell inner membrane. It catalyses the reaction a quinone + NADH + 5 H(+)(in) = a quinol + NAD(+) + 4 H(+)(out). NDH-1 shuttles electrons from NADH, via FMN and iron-sulfur (Fe-S) centers, to quinones in the respiratory chain. The immediate electron acceptor for the enzyme in this species is believed to be ubiquinone. Couples the redox reaction to proton translocation (for every two electrons transferred, four hydrogen ions are translocated across the cytoplasmic membrane), and thus conserves the redox energy in a proton gradient. The chain is NADH-quinone oxidoreductase subunit K from Acidiphilium cryptum (strain JF-5).